Here is a 337-residue protein sequence, read N- to C-terminus: Monoacylglycerol lipase abhd6-B (337 aa).

At 1-19 (MDIDVLNMFLVAGGTLLVP) the chain is on the extracellular side. A helical; Signal-anchor for type II membrane protein membrane pass occupies residues 20–42 (LLAFMTSFLLWPAALIRIYYWYW). Topologically, residues 43–337 (RRALGMQVKY…QSTDNHKKHD (295 aa)) are cytoplasmic. In terms of domain architecture, AB hydrolase-1 spans 72–313 (PSVLMLHGFS…CGHSVVMERP (242 aa)). S148 (nucleophile) is an active-site residue. Active-site charge relay system residues include D278 and H306.

It belongs to the AB hydrolase superfamily.

The protein localises to the late endosome membrane. Its subcellular location is the lysosome membrane. The protein resides in the mitochondrion membrane. The enzyme catalyses Hydrolyzes glycerol monoesters of long-chain fatty acids.. It catalyses the reaction 1-octanoylglycerol + H2O = octanoate + glycerol + H(+). It carries out the reaction 1-decanoylglycerol + H2O = decanoate + glycerol + H(+). The catalysed reaction is 1-dodecanoylglycerol + H2O = dodecanoate + glycerol + H(+). The enzyme catalyses 1-tetradecanoylglycerol + H2O = tetradecanoate + glycerol + H(+). It catalyses the reaction 2-hexadecanoylglycerol + H2O = glycerol + hexadecanoate + H(+). It carries out the reaction 2-(9Z-octadecenoyl)-glycerol + H2O = glycerol + (9Z)-octadecenoate + H(+). The catalysed reaction is 1-(9Z-octadecenoyl)-glycerol + H2O = glycerol + (9Z)-octadecenoate + H(+). The enzyme catalyses 2-(9Z,12Z-octadecadienoyl)-glycerol + H2O = (9Z,12Z)-octadecadienoate + glycerol + H(+). It catalyses the reaction 2-(5Z,8Z,11Z,14Z-eicosatetraenoyl)-glycerol + H2O = glycerol + (5Z,8Z,11Z,14Z)-eicosatetraenoate + H(+). It carries out the reaction 1-(5Z,8Z,11Z,14Z-eicosatetraenoyl)-glycerol + H2O = glycerol + (5Z,8Z,11Z,14Z)-eicosatetraenoate + H(+). The catalysed reaction is 1-(9Z,12Z-octadecadienoyl)-glycerol + H2O = (9Z,12Z)-octadecadienoate + glycerol + H(+). The enzyme catalyses 3-(9Z-octadecenoyl)-sn-glycero-1-phospho-(3'-(9Z-octadecenoyl)-1'-sn-glycerol) + H2O = 3-(9Z-octadecenoyl)-sn-glycero-1-phospho-(1'-sn-glycerol) + (9Z)-octadecenoate + H(+). It catalyses the reaction (S,S)-2-(9Z-octadecenoyl)-sn-glycero-1-phospho-(2'-(9Z-octadecenoyl)-1'-sn-glycerol) + H2O = (S,S)-2-(9Z-octadecenoyl)-sn-glycero-1-phospho-(1'-sn-glycerol) + (9Z)-octadecenoate + H(+). It carries out the reaction (R,R)-2-(9Z-octadecenoyl)-sn-glycero-3-phospho-(2'-(9Z-octadecenoyl)-3'-sn-glycerol) + H2O = (R,R)-2-(9Z-octadecenoyl)-sn-glycero-3-phospho-(3'-sn-glycerol) + (9Z)-octadecenoate + H(+). In terms of biological role, lipase that preferentially hydrolysis medium-chain saturated monoacylglycerols including 2-arachidonoylglycerol. Through 2-arachidonoylglycerol degradation may regulate endocannabinoid signaling pathways. Also has a lysophosphatidyl lipase activity with a preference for lysophosphatidylglycerol among other lysophospholipids. Also able to degrade bis(monoacylglycero)phosphate (BMP) and constitutes the major enzyme for BMP catabolism. BMP, also known as lysobisphosphatidic acid, is enriched in late endosomes and lysosomes and plays a key role in the formation of intraluminal vesicles and in lipid sorting. The chain is Monoacylglycerol lipase abhd6-B (abhd6-b) from Xenopus laevis (African clawed frog).